The chain runs to 217 residues: Uracil-DNA glycosylase (217 aa).

Asp62 serves as the catalytic Proton acceptor.

This sequence belongs to the uracil-DNA glycosylase (UDG) superfamily. UNG family.

Its subcellular location is the cytoplasm. It carries out the reaction Hydrolyzes single-stranded DNA or mismatched double-stranded DNA and polynucleotides, releasing free uracil.. In terms of biological role, excises uracil residues from the DNA which can arise as a result of misincorporation of dUMP residues by DNA polymerase or due to deamination of cytosine. The protein is Uracil-DNA glycosylase of Streptococcus pyogenes serotype M6 (strain ATCC BAA-946 / MGAS10394).